Here is a 27-residue protein sequence, read N- to C-terminus: Caerulein precursor fragment R5 (27 aa).

In terms of tissue distribution, expressed by the skin glands.

Its subcellular location is the secreted. Antimicrobial peptide. This Xenopus ruwenzoriensis (Uganda clawed frog) protein is Caerulein precursor fragment R5.